Consider the following 663-residue polypeptide: MPKIKKKGQAGAAKNYITRTQAVKKLQLSLPDFRKLCIWKGIYPREPRNKKKVSKSATASTTFYYTKDIQYLLHEPLLQKFRDQKVLEKKISRALGRGDVSDAARFERHAARPEATGKPRYTLNHVIRERYPTFNDALRDLDDCLSMLFLFANLPSTSAVPAKMIARCERLCLEFQHYLIVSHSLRKSFLSIKGIYYQANIQGEDILWLVPYKFNQRIVGDVDFRIMGTFVEFYMTLLGFVNYRLYSSIGLKYPPKFDQLKDENGAELGAFSLEGVNMATQGETKAVTNGEEQQQGPDPKVQAEVDKIIKQLKEDESKSDETAEEDAEADDEEKPTDSIDKFEPVAPGGDVLPQPAYSSSDPSQLFANFTFYLSRETPRQPLEFILRAFGCKRIGWDSVLGEGAFTNDESDPSITHHIIDRPVVQAATNEDGDGEDNQTAQKVGPNQRYPGRIYVQPQWVWDCVNDEELKSPELYAPGAALPPHLSPFVKAAPGQYDPTLPLEAQQTEAEAIEADLEDAEKGNAEDGSDVENDMDVDEAEDDEEEEEGDEEDAEEAEEEDAEEDEEESKTLQRQLELEAELQGKKVQNTKVDSKTKAKLEQRKALEKKAREEAEDLERAKGMLSKKKRKLFEQMQYTNNKKSAQDEKLRAKRRKLEKEKAQKA.

The segment covering 311-321 has biased composition (basic and acidic residues); the sequence is QLKEDESKSDE. Disordered stretches follow at residues 311 to 360, 428 to 447, and 504 to 663; these read QLKE…YSSS, TNEDGDGEDNQTAQKVGPNQ, and AQQT…AQKA. The segment covering 322 to 334 has biased composition (acidic residues); that stretch reads TAEEDAEADDEEK. Residues 361-477 form the BRCT domain; that stretch reads DPSQLFANFT…ELKSPELYAP (117 aa). Positions 501-663 form a coiled coil; that stretch reads PLEAQQTEAE…KLEKEKAQKA (163 aa). Over residues 526 to 567 the composition is skewed to acidic residues; sequence DGSDVENDMDVDEAEDDEEEEEGDEEDAEEAEEEDAEEDEEE. A compositionally biased stretch (basic and acidic residues) spans 591–620; the sequence is VDSKTKAKLEQRKALEKKAREEAEDLERAK.

It belongs to the pescadillo family. Component of the NOP7 complex, composed of erb1, nop7 and ytm1. The complex is held together by erb1, which interacts with nop7 via its N-terminal domain and with ytm1 via a high-affinity interaction between the seven-bladed beta-propeller domains of the 2 proteins. The NOP7 complex associates with the 66S pre-ribosome.

The protein resides in the nucleus. It is found in the nucleolus. The protein localises to the nucleoplasm. Its function is as follows. Component of the NOP7 complex, which is required for maturation of the 25S and 5.8S ribosomal RNAs and formation of the 60S ribosome. This is Pescadillo homolog (nop7) from Neurospora crassa (strain ATCC 24698 / 74-OR23-1A / CBS 708.71 / DSM 1257 / FGSC 987).